A 1466-amino-acid polypeptide reads, in one-letter code: ABC transporter G family member 10 (1466 aa).

Residues 23–45 are compositionally biased toward low complexity; the sequence is NTPQYENNNNNNNNTSGNESPNI. Positions 23-47 are disordered; sequence NTPQYENNNNNNNNTSGNESPNILN. The ABC transporter 1 domain maps to 138–392; the sequence is VTIFNLFRPS…FLDLGFDCEP (255 aa). The 228-residue stretch at 497-724 folds into the ABC transmembrane type-2 1 domain; sequence WGDRFALISK…NGSTMSYQDQ (228 aa). The next 6 helical transmembrane spans lie at 501-521, 537-557, 586-606, 611-631, 641-661, and 767-787; these read FALISKYISIIVQTFVYASLF, AIYAAILFNAFVSAGELGLTF, IPLTAIQVTIFSVIVYFMYGL, GKFFIFLFTIFGSTLSMVAFF, LYVSQNILNVFILFMFTYGGY, and IITFLWWIFFVIINMIALELF. The ABC transporter 2 domain maps to 838 to 1082; that stretch reads FTWNHIHYTV…LTSYFERNGV (245 aa). 874–881 lines the ATP pocket; sequence GSSGAGKT. Positions 1177 to 1399 constitute an ABC transmembrane type-2 2 domain; that stretch reads SYVYGIFTQA…LTCKEYFKPT (223 aa). Transmembrane regions (helical) follow at residues 1178–1198, 1214–1234, 1253–1273, 1290–1310, 1319–1339, and 1440–1460; these read YVYGIFTQAAASGLIIGFTFW, IFEILFLGILYIFIAIPQFLI, FAISIVIVELPFVAVAGTICF, FYFYITFILFLFICVSLGQVV, LAQTILPLLLVMLFLFCGVLV, and YGILWAFFIFNIIMVVSFVYL.

This sequence belongs to the ABC transporter superfamily. ABCG family. PDR (TC 3.A.1.205) subfamily.

It is found in the membrane. The protein is ABC transporter G family member 10 (abcG10) of Dictyostelium discoideum (Social amoeba).